Here is a 680-residue protein sequence, read N- to C-terminus: DNA-directed RNA polymerase subunit beta' (680 aa).

Zn(2+) contacts are provided by C69, C71, C87, and C90. 3 residues coordinate Mg(2+): D489, D491, and D493.

It belongs to the RNA polymerase beta' chain family. RpoC1 subfamily. In plastids the minimal PEP RNA polymerase catalytic core is composed of four subunits: alpha, beta, beta', and beta''. When a (nuclear-encoded) sigma factor is associated with the core the holoenzyme is formed, which can initiate transcription. Requires Mg(2+) as cofactor. The cofactor is Zn(2+).

It localises to the plastid. It is found in the chloroplast. The catalysed reaction is RNA(n) + a ribonucleoside 5'-triphosphate = RNA(n+1) + diphosphate. Its function is as follows. DNA-dependent RNA polymerase catalyzes the transcription of DNA into RNA using the four ribonucleoside triphosphates as substrates. This Nandina domestica (Heavenly bamboo) protein is DNA-directed RNA polymerase subunit beta'.